The following is a 130-amino-acid chain: Small ribosomal subunit protein uS9 (130 aa).

The interval 109–130 (RMKERKKYGLKAARRAPQFSKR) is disordered. A compositionally biased stretch (basic residues) spans 111–130 (KERKKYGLKAARRAPQFSKR).

It belongs to the universal ribosomal protein uS9 family.

This chain is Small ribosomal subunit protein uS9, found in Lachnoclostridium phytofermentans (strain ATCC 700394 / DSM 18823 / ISDg) (Clostridium phytofermentans).